The following is a 496-amino-acid chain: Glycerol kinase (496 aa).

Residue threonine 12 coordinates ADP. ATP-binding residues include threonine 12, threonine 13, and serine 14. Threonine 12 is a binding site for sn-glycerol 3-phosphate. ADP is bound at residue arginine 16. 3 residues coordinate sn-glycerol 3-phosphate: arginine 82, glutamate 83, and tyrosine 134. 3 residues coordinate glycerol: arginine 82, glutamate 83, and tyrosine 134. The residue at position 230 (histidine 230) is a Phosphohistidine; by HPr. Aspartate 244 lines the sn-glycerol 3-phosphate pocket. Positions 244 and 245 each coordinate glycerol. ADP-binding residues include threonine 266 and glycine 309. ATP-binding residues include threonine 266, glycine 309, glutamine 313, and glycine 410. ADP contacts are provided by glycine 410 and asparagine 414.

This sequence belongs to the FGGY kinase family. As to quaternary structure, homotetramer and homodimer (in equilibrium). In terms of processing, the phosphoenolpyruvate-dependent sugar phosphotransferase system (PTS), including enzyme I, and histidine-containing protein (HPr) are required for the phosphorylation, which leads to the activation of the enzyme.

It catalyses the reaction glycerol + ATP = sn-glycerol 3-phosphate + ADP + H(+). Its pathway is polyol metabolism; glycerol degradation via glycerol kinase pathway; sn-glycerol 3-phosphate from glycerol: step 1/1. Its activity is regulated as follows. Activated by phosphorylation and inhibited by fructose 1,6-bisphosphate (FBP). In terms of biological role, key enzyme in the regulation of glycerol uptake and metabolism. Catalyzes the phosphorylation of glycerol to yield sn-glycerol 3-phosphate. This chain is Glycerol kinase, found in Bacillus anthracis (strain A0248).